Here is a 205-residue protein sequence, read N- to C-terminus: Small ribosomal subunit protein uS4 (205 aa).

The S4 RNA-binding domain maps to 103–173 (RRLQTIVMKK…LEKSKRAEAA (71 aa)). Residues 174–205 (AREAAAEAAEAEQAAAQAAAPTPAPAAAAPKQ) are disordered. Over residues 179 to 205 (AEAAEAEQAAAQAAAPTPAPAAAAPKQ) the composition is skewed to low complexity.

The protein belongs to the universal ribosomal protein uS4 family. In terms of assembly, part of the 30S ribosomal subunit. Contacts protein S5. The interaction surface between S4 and S5 is involved in control of translational fidelity.

Its function is as follows. One of the primary rRNA binding proteins, it binds directly to 16S rRNA where it nucleates assembly of the body of the 30S subunit. In terms of biological role, with S5 and S12 plays an important role in translational accuracy. This Cenarchaeum symbiosum (strain A) protein is Small ribosomal subunit protein uS4.